The primary structure comprises 1926 residues: Rho GTPase-activating protein 21-A (1926 aa).

Residues 1 to 41 (MATRRAIVPEQQQEPSSPASEISKNKDGQEQSEMVSPMEEE) form a disordered region. A compositionally biased stretch (polar residues) spans 10 to 22 (EQQQEPSSPASEI). One can recognise a PDZ domain in the interval 77 to 162 (HTSIKDEENG…TLELSVMPKD (86 aa)). Disordered stretches follow at residues 211 to 236 (VEVP…TTQP), 353 to 378 (PTAQ…QIDW), 416 to 487 (TDYN…RSES), 571 to 592 (QPTR…DRSG), 640 to 704 (FQRK…DSDA), and 868 to 905 (GKLG…DVFS). Polar residues-rich tracts occupy residues 216-236 (SGTS…TTQP), 353-372 (PTAQ…SPGP), and 416-429 (TDYN…FSGQ). The span at 441 to 451 (QQSVQMRQRSV) shows a compositional bias: low complexity. Residues 452–466 (SQERLEDPVLMKEWP) show a composition bias toward basic and acidic residues. Over residues 468–479 (SASQDTLSSAVA) the composition is skewed to polar residues. The span at 640 to 669 (FQRKTQTESASGFQLDSVKTSMSASSSPPA) shows a compositional bias: polar residues. The region spanning 906-1019 (DSNKEGFLYF…WIKAIQENGN (114 aa)) is the PH domain. Polar residues predominate over residues 1044–1064 (MSSASNKSEQSPKAPRQTLSI). Positions 1044-1107 (MSSASNKSEQ…SPPKDKGSWR (64 aa)) are disordered. Basic and acidic residues predominate over residues 1083 to 1105 (PKQESERRLFSKDDISPPKDKGS). Residues 1126–1318 (VRLDDCPPAH…TLIQKHDWFF (193 aa)) form the Rho-GAP domain. Disordered stretches follow at residues 1330–1381 (VHEE…SGKD), 1396–1416 (ASRK…EDEL), 1512–1540 (QMEE…PKVV), 1573–1598 (LDPN…DERS), 1626–1658 (RQHR…TPRL), and 1827–1915 (STSE…LSGT). A compositionally biased stretch (polar residues) spans 1512–1534 (QMEESMSDSGTMLSNSSQASAQR). Composition is skewed to polar residues over residues 1639–1653 (VQAN…TEGS) and 1866–1902 (TADI…NNFS).

The protein localises to the golgi apparatus membrane. It localises to the cell junction. It is found in the cytoplasmic vesicle membrane. Its subcellular location is the cytoplasm. The protein resides in the cytoskeleton. Functionally, GTPase-activating protein (GAP) for rhoa and cdc42. The chain is Rho GTPase-activating protein 21-A (arhgap21-a) from Xenopus laevis (African clawed frog).